The primary structure comprises 238 residues: Probable transcriptional regulatory protein YeeN (238 aa).

It belongs to the TACO1 family. YeeN subfamily.

Its subcellular location is the cytoplasm. This Shigella sonnei (strain Ss046) protein is Probable transcriptional regulatory protein YeeN.